The chain runs to 386 residues: UDP-N-acetylbacillosamine transaminase (386 aa).

Residues 25 to 28 (NYIA), alanine 56, and serine 179 contribute to the substrate site. Position 184 is an N6-(pyridoxal phosphate)lysine (lysine 184). Residues asparagine 227 and 325–328 (QIET) contribute to the substrate site.

The protein belongs to the DegT/DnrJ/EryC1 family. The cofactor is pyridoxal 5'-phosphate.

It catalyses the reaction UDP-N-acetylbacillosamine + 2-oxoglutarate = UDP-2-acetamido-2,6-dideoxy-alpha-D-xylo-hex-4-ulose + L-glutamate. Its pathway is protein modification; protein glycosylation. In terms of biological role, aminotransferase involved in the bacillosamine biosynthesis pathway by producing UDP-4-amino-4,6-dideoxy-alpha-D-GlcNAc (UDP-2-acetamido-4-amino-2,4,6-trideoxy-alpha-D-glucopyranose), a precursor used in the production of the glycan component 2,4-diacetamido-2,4,6-trideoxy-alpha-D-glucopyranose. Required for host colonization and virulence. Involved in the N-linked protein glycosylation pathway. The polypeptide is UDP-N-acetylbacillosamine transaminase (pglE) (Campylobacter jejuni subsp. jejuni serotype O:2 (strain ATCC 700819 / NCTC 11168)).